A 130-amino-acid chain; its full sequence is Small ribosomal subunit protein uS9 (130 aa).

The protein belongs to the universal ribosomal protein uS9 family.

The protein is Small ribosomal subunit protein uS9 of Shewanella denitrificans (strain OS217 / ATCC BAA-1090 / DSM 15013).